The primary structure comprises 249 residues: Coproheme decarboxylase (249 aa).

Fe-coproporphyrin III contacts are provided by residues Arg-131, 145–149, His-172, and Gln-185; that span reads YPMDK. The active site involves Tyr-145.

It belongs to the ChdC family. Type 1 subfamily. Fe-coproporphyrin III is required as a cofactor.

It catalyses the reaction Fe-coproporphyrin III + 2 H2O2 + 2 H(+) = heme b + 2 CO2 + 4 H2O. It carries out the reaction Fe-coproporphyrin III + H2O2 + H(+) = harderoheme III + CO2 + 2 H2O. The enzyme catalyses harderoheme III + H2O2 + H(+) = heme b + CO2 + 2 H2O. It functions in the pathway porphyrin-containing compound metabolism; protoheme biosynthesis. In terms of biological role, involved in coproporphyrin-dependent heme b biosynthesis. Catalyzes the decarboxylation of Fe-coproporphyrin III (coproheme) to heme b (protoheme IX), the last step of the pathway. The reaction occurs in a stepwise manner with a three-propionate intermediate. The sequence is that of Coproheme decarboxylase from Staphylococcus saprophyticus subsp. saprophyticus (strain ATCC 15305 / DSM 20229 / NCIMB 8711 / NCTC 7292 / S-41).